Reading from the N-terminus, the 319-residue chain is HTH-type transcriptional regulator YidZ (319 aa).

The HTH lysR-type domain occupies 8–65 (LDLNLLLCLQLLMQERSVTKAAKRMNVTPSAVSKSLAKLRAWFDDPLFVNTPLGLAPT). A DNA-binding region (H-T-H motif) is located at residues 25–44 (VTKAAKRMNVTPSAVSKSLA).

The protein belongs to the LysR transcriptional regulatory family.

Involved in anaerobic NO protection. The chain is HTH-type transcriptional regulator YidZ from Salmonella typhi.